The primary structure comprises 179 residues: Putative DUP240 protein DFP1 (179 aa).

The next 2 membrane-spanning stretches (helical) occupy residues 4–24 (FLLF…SGVL) and 26–46 (PAMV…IWSF).

This sequence belongs to the DUP/COS family.

It is found in the membrane. In Saccharomyces cerevisiae (strain ATCC 204508 / S288c) (Baker's yeast), this protein is Putative DUP240 protein DFP1.